A 429-amino-acid chain; its full sequence is Serine--tRNA ligase (429 aa).

235–237 (TAE) contributes to the L-serine binding site. Residue 266-268 (RSE) participates in ATP binding. Glu-289 lines the L-serine pocket. Residue 353–356 (EISS) participates in ATP binding. Ser-389 serves as a coordination point for L-serine.

The protein belongs to the class-II aminoacyl-tRNA synthetase family. Type-1 seryl-tRNA synthetase subfamily. In terms of assembly, homodimer. The tRNA molecule binds across the dimer.

It localises to the cytoplasm. The enzyme catalyses tRNA(Ser) + L-serine + ATP = L-seryl-tRNA(Ser) + AMP + diphosphate + H(+). It carries out the reaction tRNA(Sec) + L-serine + ATP = L-seryl-tRNA(Sec) + AMP + diphosphate + H(+). Its pathway is aminoacyl-tRNA biosynthesis; selenocysteinyl-tRNA(Sec) biosynthesis; L-seryl-tRNA(Sec) from L-serine and tRNA(Sec): step 1/1. In terms of biological role, catalyzes the attachment of serine to tRNA(Ser). Is also able to aminoacylate tRNA(Sec) with serine, to form the misacylated tRNA L-seryl-tRNA(Sec), which will be further converted into selenocysteinyl-tRNA(Sec). This Histophilus somni (strain 2336) (Haemophilus somnus) protein is Serine--tRNA ligase.